A 438-amino-acid polypeptide reads, in one-letter code: MSTLEKVSERIKNSLFVPIDNNNMQDSINSNEVSGQVATLFANVPLGPVDPILGVSTAFKADTDPRKVDTSVGAYRDENGKPYVLKCVFEAEKRLLGAPKEYLPIDGIPEFNKLSAKLLYGDAMVGKEKRMVTVQALSGTGALRIGIIFIRKYLPAGTVVYISRPSWTNHHNICKESGVQSAEYAYYDPKTKGLDFTGMINDMRAAPNGSVFVLHLCAHNPTGVDPTHEQWNIIADVMREKNHIPFMDCAYQGYASGDLDYDAYSARLFLNRGFEMFSAQSYSKNFGLYGERTGALTIVSHREDVIPKMLSQLKMDIRAMYSSPPTHGARLVTTVLSDPELTALWVKELKEMSGRIKDVRQKVLDALIARKVPGNWEHIVNQIGMFTYTGLTKPQVDILVNKYHIYLLGSGRVSLAGLNNKNIDYFADAILDAVTSTQ.

Residues Gly73, Trp167, and Asn220 each coordinate L-aspartate. Lys284 is subject to N6-(pyridoxal phosphate)lysine. Arg412 lines the L-aspartate pocket.

Belongs to the class-I pyridoxal-phosphate-dependent aminotransferase family. As to quaternary structure, homodimer. It depends on pyridoxal 5'-phosphate as a cofactor.

It is found in the cytoplasm. It carries out the reaction L-aspartate + 2-oxoglutarate = oxaloacetate + L-glutamate. Plays a key role in amino acid metabolism. This chain is Aspartate aminotransferase, cytoplasmic (aatB), found in Dictyostelium discoideum (Social amoeba).